A 382-amino-acid polypeptide reads, in one-letter code: 2-heptyl-3-hydroxy-4(1H)-quinolone synthase (382 aa).

It belongs to the 3-hydroxybenzoate 6-hydroxylase family.

It carries out the reaction 2-heptyl-4(1H)-quinolone + NADH + O2 + H(+) = 2-heptyl-3-hydroxy-4(1H)-quinolone + NAD(+) + H2O. In terms of biological role, involved in the terminal step of the biosynthesis of quinolone which in addition to serve as a potent signal for quorum sensing, chelates iron and promotes the formation of membrane vesicles (MVs). Catalyzes the hydroxylation of 2-heptyl-4-quinolone (C7-HHQ) to yield 2-heptyl-3-hydroxy-4-quinolone (PQS). The polypeptide is 2-heptyl-3-hydroxy-4(1H)-quinolone synthase (pqsH) (Pseudomonas aeruginosa (strain ATCC 15692 / DSM 22644 / CIP 104116 / JCM 14847 / LMG 12228 / 1C / PRS 101 / PAO1)).